The sequence spans 208 residues: Small ribosomal subunit protein uS4 (208 aa).

One can recognise an S4 RNA-binding domain in the interval 95 to 159; that stretch reads TIIDNIVYRA…LKKLIGSNIE (65 aa).

The protein belongs to the universal ribosomal protein uS4 family. In terms of assembly, part of the 30S ribosomal subunit. Contacts protein S5. The interaction surface between S4 and S5 is involved in control of translational fidelity.

Its function is as follows. One of the primary rRNA binding proteins, it binds directly to 16S rRNA where it nucleates assembly of the body of the 30S subunit. In terms of biological role, with S5 and S12 plays an important role in translational accuracy. The chain is Small ribosomal subunit protein uS4 from Borreliella afzelii (strain PKo) (Borrelia afzelii).